The primary structure comprises 272 residues: Isoprenyl transferase (272 aa).

The active site involves Asp-32. Asp-32 lines the Mg(2+) pocket. Residues 33-36, Trp-37, Arg-45, His-49, and 77-79 contribute to the substrate site; these read GNGR and STE. The active-site Proton acceptor is Asn-80. Substrate contacts are provided by residues Trp-81, Arg-83, Arg-200, and 206-208; that span reads RIS. Glu-219 is a binding site for Mg(2+).

Belongs to the UPP synthase family. As to quaternary structure, homodimer. Requires Mg(2+) as cofactor.

Its function is as follows. Catalyzes the condensation of isopentenyl diphosphate (IPP) with allylic pyrophosphates generating different type of terpenoids. This is Isoprenyl transferase from Prochlorococcus marinus subsp. pastoris (strain CCMP1986 / NIES-2087 / MED4).